A 782-amino-acid polypeptide reads, in one-letter code: LINE-1 type transposase domain-containing protein 1 (782 aa).

Disordered stretches follow at residues 1 to 30 (MSGV…TATS), 90 to 200 (QEGD…GGAG), and 338 to 397 (NKGT…SAEE). Basic and acidic residues-rich tracts occupy residues 11-27 (LQKE…ERKT) and 95-107 (ISER…KVEE). Serine 136 is subject to Phosphoserine. Composition is skewed to basic and acidic residues over residues 143–158 (SLER…HGRC) and 183–194 (EENRLKAPKESP). The span at 347–396 (GEEEEISETQGEETSEGETSELGEEEGSESEEEEESSESEEEEESSESAE) shows a compositional bias: acidic residues. Phosphoserine occurs at positions 407, 409, 442, 478, 490, 559, and 567.

This sequence belongs to the transposase 22 family.

In Mus musculus (Mouse), this protein is LINE-1 type transposase domain-containing protein 1 (L1td1).